The sequence spans 428 residues: Cell division protein FtsZ (428 aa).

GTP-binding positions include 73–77 (GGGGN), 160–162 (GTG), Glu191, Arg195, and Asp239. The tract at residues 378–428 (NAANARVVSAPPKRTPTQTPLTNSPAPTPEPKEKSGLDIPDFLQRRRPPKN) is disordered. A compositionally biased stretch (polar residues) spans 392–402 (TPTQTPLTNSP).

The protein belongs to the FtsZ family. As to quaternary structure, homodimer. Polymerizes to form a dynamic ring structure in a strictly GTP-dependent manner. Interacts directly with several other division proteins.

It is found in the cytoplasm. Its function is as follows. Essential cell division protein that forms a contractile ring structure (Z ring) at the future cell division site. The regulation of the ring assembly controls the timing and the location of cell division. One of the functions of the FtsZ ring is to recruit other cell division proteins to the septum to produce a new cell wall between the dividing cells. Binds GTP and shows GTPase activity. The polypeptide is Cell division protein FtsZ (Nostoc sp. (strain PCC 7120 / SAG 25.82 / UTEX 2576)).